We begin with the raw amino-acid sequence, 332 residues long: L-lactate dehydrogenase A chain (332 aa).

Ala-2 is subject to N-acetylalanine. Lys-5 carries the N6-acetyllysine; alternate modification. Lys-5 bears the N6-succinyllysine; alternate mark. An N6-acetyllysine modification is found at Lys-14. A Phosphothreonine modification is found at Thr-18. Position 29–57 (29–57) interacts with NAD(+); the sequence is GAVGMACAISILMKDLADELALVDVIEDK. Lys-57 carries the post-translational modification N6-acetyllysine; alternate. Residue Lys-57 forms a Glycyl lysine isopeptide (Lys-Gly) (interchain with G-Cter in SUMO2); alternate linkage. An N6-acetyllysine modification is found at Lys-81. Arg-99 lines the NAD(+) pocket. Arg-106 provides a ligand contact to substrate. The residue at position 118 (Lys-118) is an N6-acetyllysine; alternate. N6-succinyllysine; alternate is present on Lys-118. At Lys-126 the chain carries N6-acetyllysine. Asn-138 contacts NAD(+). Substrate contacts are provided by Asn-138 and Arg-169. The active-site Proton acceptor is His-193. N6-acetyllysine is present on residues Lys-224 and Lys-232. Tyr-239 is subject to Phosphotyrosine. Lys-243 is modified (N6-acetyllysine). Thr-248 contributes to the substrate binding site. Position 309 is a phosphothreonine (Thr-309). An N6-acetyllysine; alternate modification is found at Lys-318. Lys-318 carries the post-translational modification N6-succinyllysine; alternate. Thr-322 bears the Phosphothreonine mark.

It belongs to the LDH/MDH superfamily. LDH family. In terms of assembly, homotetramer. Interacts with PTEN upstream reading frame protein MP31. In terms of processing, ISGylated.

The protein localises to the cytoplasm. The catalysed reaction is (S)-lactate + NAD(+) = pyruvate + NADH + H(+). Its pathway is fermentation; pyruvate fermentation to lactate; (S)-lactate from pyruvate: step 1/1. Interconverts simultaneously and stereospecifically pyruvate and lactate with concomitant interconversion of NADH and NAD(+). The chain is L-lactate dehydrogenase A chain (LDHA) from Macaca fascicularis (Crab-eating macaque).